A 397-amino-acid chain; its full sequence is Chorismate synthase (397 aa).

The NADP(+) site is built by arginine 40 and arginine 46. FMN is bound by residues 129–131, 257–258, glycine 302, 317–321, and arginine 343; these read RSS, QA, and KPISS.

The protein belongs to the chorismate synthase family. In terms of assembly, homotetramer. FMNH2 is required as a cofactor.

The enzyme catalyses 5-O-(1-carboxyvinyl)-3-phosphoshikimate = chorismate + phosphate. It participates in metabolic intermediate biosynthesis; chorismate biosynthesis; chorismate from D-erythrose 4-phosphate and phosphoenolpyruvate: step 7/7. Catalyzes the anti-1,4-elimination of the C-3 phosphate and the C-6 proR hydrogen from 5-enolpyruvylshikimate-3-phosphate (EPSP) to yield chorismate, which is the branch point compound that serves as the starting substrate for the three terminal pathways of aromatic amino acid biosynthesis. This reaction introduces a second double bond into the aromatic ring system. The sequence is that of Chorismate synthase from Pelodictyon phaeoclathratiforme (strain DSM 5477 / BU-1).